The sequence spans 552 residues: Protein psiB (552 aa).

An N-terminal signal peptide occupies residues 1 to 18 (MKLLSVLITFLLATVIYS). Residue Asn-60 is glycosylated (N-linked (GlcNAc...) asparagine). In terms of domain architecture, PA14 spans 114 to 255 (TYDTTRNIYV…EDYCGVCQGD (142 aa)). N-linked (GlcNAc...) asparagine glycans are attached at residues Asn-281, Asn-313, Asn-340, Asn-365, Asn-446, Asn-472, and Asn-521.

The protein belongs to the prespore-cell-inducing factor family.

The protein resides in the secreted. The chain is Protein psiB (psiB) from Dictyostelium discoideum (Social amoeba).